A 58-amino-acid chain; its full sequence is uncharacterized protein (58 aa).

A run of 2 helical transmembrane segments spans residues 7-27 and 29-49; these read IFDIVMYIIFGVLSLFLVAKT and YGTGVLVFVAILYLAVIAYKI.

The protein resides in the cell membrane. This is an uncharacterized protein from Bacillus subtilis (strain 168).